Here is a 228-residue protein sequence, read N- to C-terminus: Putative N-acetylmannosamine-6-phosphate 2-epimerase (228 aa).

This sequence belongs to the NanE family.

The catalysed reaction is an N-acyl-D-glucosamine 6-phosphate = an N-acyl-D-mannosamine 6-phosphate. Its pathway is amino-sugar metabolism; N-acetylneuraminate degradation; D-fructose 6-phosphate from N-acetylneuraminate: step 3/5. Functionally, converts N-acetylmannosamine-6-phosphate (ManNAc-6-P) to N-acetylglucosamine-6-phosphate (GlcNAc-6-P). The sequence is that of Putative N-acetylmannosamine-6-phosphate 2-epimerase from Mycoplasmopsis pulmonis (strain UAB CTIP) (Mycoplasma pulmonis).